The primary structure comprises 285 residues: Large ribosomal subunit protein uL2 (285 aa).

Residues 215–285 (GRSRHKGIRP…IIRNRKGEQY (71 aa)) are disordered. Over residues 256 to 272 (WGKRHMGVKTRNMKKHS) the composition is skewed to basic residues.

It belongs to the universal ribosomal protein uL2 family. In terms of assembly, part of the 50S ribosomal subunit. Forms a bridge to the 30S subunit in the 70S ribosome.

In terms of biological role, one of the primary rRNA binding proteins. Required for association of the 30S and 50S subunits to form the 70S ribosome, for tRNA binding and peptide bond formation. It has been suggested to have peptidyltransferase activity; this is somewhat controversial. Makes several contacts with the 16S rRNA in the 70S ribosome. In Mycoplasma genitalium (strain ATCC 33530 / DSM 19775 / NCTC 10195 / G37) (Mycoplasmoides genitalium), this protein is Large ribosomal subunit protein uL2.